The sequence spans 945 residues: Translation initiation factor IF-2 (945 aa).

Disordered regions lie at residues 52–80 (RSHG…DSSG) and 96–357 (MKRD…FQAP). Positions 153–175 (PEPEPIVEPEPEPEPEPEPEPQP) are enriched in acidic residues. 2 stretches are compositionally biased toward basic and acidic residues: residues 215 to 283 (DEER…KEAA) and 294 to 310 (AKTE…RTAR). The tr-type G domain maps to 445-614 (PRAPVVTVMG…LLQAEVLELT (170 aa)). Residues 454–461 (GHVDHGKT) form a G1 region. GTP is bound at residue 454–461 (GHVDHGKT). A G2 region spans residues 479–483 (GITQH). Residues 500-503 (DTPG) are G3. Residues 500–504 (DTPGH) and 554–557 (NKID) each bind GTP. Residues 554-557 (NKID) are G4. The tract at residues 590–592 (SAK) is G5.

It belongs to the TRAFAC class translation factor GTPase superfamily. Classic translation factor GTPase family. IF-2 subfamily.

Its subcellular location is the cytoplasm. Functionally, one of the essential components for the initiation of protein synthesis. Protects formylmethionyl-tRNA from spontaneous hydrolysis and promotes its binding to the 30S ribosomal subunits. Also involved in the hydrolysis of GTP during the formation of the 70S ribosomal complex. This is Translation initiation factor IF-2 from Aromatoleum aromaticum (strain DSM 19018 / LMG 30748 / EbN1) (Azoarcus sp. (strain EbN1)).